The primary structure comprises 251 residues: Putative (5-formylfuran-3-yl)methyl phosphate synthase (251 aa).

Residue lysine 29 is the Schiff-base intermediate with substrate of the active site. The active-site Proton acceptor is lysine 87.

This sequence belongs to the MfnB family.

It carries out the reaction 2 D-glyceraldehyde 3-phosphate = 4-(hydroxymethyl)-2-furancarboxaldehyde phosphate + phosphate + 2 H2O. Its function is as follows. Catalyzes the formation of 4-(hydroxymethyl)-2-furancarboxaldehyde phosphate (4-HFC-P) from two molecules of glyceraldehyde-3-P (GA-3-P). This chain is Putative (5-formylfuran-3-yl)methyl phosphate synthase, found in Kitasatospora aureofaciens (Streptomyces aureofaciens).